We begin with the raw amino-acid sequence, 217 residues long: Elongation factor Ts (217 aa).

The segment at 82–85 is involved in Mg(2+) ion dislocation from EF-Tu; sequence TDFV.

The protein belongs to the EF-Ts family.

It is found in the cytoplasm. In terms of biological role, associates with the EF-Tu.GDP complex and induces the exchange of GDP to GTP. It remains bound to the aminoacyl-tRNA.EF-Tu.GTP complex up to the GTP hydrolysis stage on the ribosome. The sequence is that of Elongation factor Ts from Desulforamulus reducens (strain ATCC BAA-1160 / DSM 100696 / MI-1) (Desulfotomaculum reducens).